Consider the following 116-residue polypeptide: Large ribosomal subunit protein uL18 (116 aa).

This sequence belongs to the universal ribosomal protein uL18 family. In terms of assembly, part of the 50S ribosomal subunit; part of the 5S rRNA/L5/L18/L25 subcomplex. Contacts the 5S and 23S rRNAs.

This is one of the proteins that bind and probably mediate the attachment of the 5S RNA into the large ribosomal subunit, where it forms part of the central protuberance. The polypeptide is Large ribosomal subunit protein uL18 (Shewanella sediminis (strain HAW-EB3)).